The sequence spans 486 residues: Protein kinase C and casein kinase substrate in neurons protein 2 (486 aa).

The F-BAR domain occupies Val11–Asp282. Positions Lys25 to Ile274 form a coiled coil. Position 53 is an N6-acetyllysine (Lys53). Ser273 carries the post-translational modification Phosphoserine. Position 313 is a phosphoserine; by PKC (Ser313). A disordered region spans residues Arg315 to Gly426. A compositionally biased stretch (polar residues) spans Thr327–Asn362. The short motif at Asn362–Phe364 is the NPF1 element. Ser373 is subject to Phosphoserine; by IKKB. Over residues Asn384–Thr396 the composition is skewed to polar residues. At Ser399 the chain carries Phosphoserine. Residues Asn404 to Ser416 are compositionally biased toward polar residues. An NPF2 motif is present at residues Asn405–Phe407. Residues Asn417–Phe419 carry the NPF3 motif. The SH3 domain occupies Gly426 to Gln486. Position 446 is a phosphoserine (Ser446).

It belongs to the PACSIN family. As to quaternary structure, homodimer. May form heterooligomers with other PACSINs. Interacts (via NPF motifs) with EHD1 (via EH domain). Interacts (via NPF motifs) with EHD2 (via EH domain); this interaction probably stabilizes the caveolae. Interacts with EHD3. Interacts (via the SH3 domain) with MICALL1. Interacts with RAC1. Interacts (via SH3 domain) with DNM1, SYN1, SYNJ1 and WASL. Interacts (via F-BAR domain) with CAV1; this interaction induces membrane tubulation. Interacts with TRPV4. Forms a complex with EHD4 and MICALL1; the complex controls CDH5 trafficking and coordinates angiogenesis. Post-translationally, phosphorylated by casein kinase 2 (CK2). Phosphorylation by PKC probably decreases the membrane binding and tubulation capacities of PACSIN2, thereby modulating the lifetime of caveolae. Widely expressed (at protein level).

It localises to the cytoplasm. The protein localises to the cytoskeleton. The protein resides in the cytoplasmic vesicle membrane. It is found in the cell projection. Its subcellular location is the ruffle membrane. It localises to the early endosome. The protein localises to the recycling endosome membrane. The protein resides in the cell membrane. It is found in the membrane. Its subcellular location is the caveola. It localises to the cell junction. The protein localises to the adherens junction. Functionally, regulates the morphogenesis and endocytosis of caveolae. Lipid-binding protein that is able to promote the tubulation of the phosphatidic acid-containing membranes it preferentially binds. Plays a role in intracellular vesicle-mediated transport. Involved in the endocytosis of cell-surface receptors like the EGF receptor, contributing to its internalization in the absence of EGF stimulus. Essential for endothelial organization in sprouting angiogenesis, modulates CDH5-based junctions. Facilitates endothelial front-rear polarity during migration by recruiting EHD4 and MICALL1 to asymmetric adherens junctions between leader and follower cells. The protein is Protein kinase C and casein kinase substrate in neurons protein 2 (Pacsin2) of Mus musculus (Mouse).